Here is a 499-residue protein sequence, read N- to C-terminus: Trichoplein keratin filament-binding protein (499 aa).

Positions 12–38 (SRVRTLEQQLVRQREQEARLRRQWEQH) form a coiled coil. 2 disordered regions span residues 46–78 (DVRS…EEKQ) and 169–209 (VQQQ…EEEN). Residues 50–67 (SKQAQWSSRQSFHRSMSA) show a composition bias toward polar residues. Composition is skewed to basic and acidic residues over residues 69-78 (QRDRMREEKQ) and 172-209 (QEKK…EEEN). Coiled coils occupy residues 71-133 (DRMR…ERRK), 168-306 (QVQQ…ALLE), and 359-484 (WEKR…MIRQ). Residues 74–499 (REEKQRKLEE…IHSRPRSAWT (426 aa)) form an interaction with keratin proteins region. The tract at residues 260-426 (KMMEESRRKT…RLTLRLEKEQ (167 aa)) is trichohyalin/plectin homology domain.

This sequence belongs to the TCHP family.

The protein localises to the cytoplasm. It is found in the cytoskeleton. Its subcellular location is the microtubule organizing center. The protein resides in the centrosome. Its function is as follows. May act as a 'capping' or 'branching' protein for keratin filaments in the cell periphery. May regulate K8/K18 filament and desmosome organization mainly at the apical or peripheral regions of simple epithelial cells. The chain is Trichoplein keratin filament-binding protein from Danio rerio (Zebrafish).